Consider the following 216-residue polypeptide: Cytosolic-abundant heat soluble protein 2 (216 aa).

Residues 1–11 (MSRDQGSTEYD) show a composition bias toward polar residues. Disordered stretches follow at residues 1-34 (MSRD…DVRT) and 66-91 (RISG…KDRE). The span at 12-22 (ANQRQEQHQEQ) shows a compositional bias: basic and acidic residues. 2 stretches are compositionally biased toward polar residues: residues 25–34 (TSYTHTDVRT) and 68–77 (SGQSSETHVQ). Residues 81–180 (EMEAEARKDR…ARLATQALDQ (100 aa)) are a coiled coil. CAHS motif stretches follow at residues 115 to 133 (YRKQ…LEKQ) and 152 to 170 (QKRQ…LDRE).

This sequence belongs to the Cytosolic-abundant heat soluble protein (CAHS) family.

Its subcellular location is the cytoplasm. CAHS proteins are cytosolic heat soluble proteins that seem to contribute to the anhydrobiosis in tardigrades, but their specific mechanisms are yet to be identified. It is possible that protection during anhydrobiosis might occur via the stabilization of vitrifying small molecules such as sugars, but not via the direct glass transition of CAHS proteins themselves. In Ramazzottius varieornatus (Water bear), this protein is Cytosolic-abundant heat soluble protein 2.